Consider the following 524-residue polypeptide: Glutamyl-tRNA(Gln) amidotransferase subunit A, mitochondrial (524 aa).

Catalysis depends on charge relay system residues Lys-76 and Ser-171. The active-site Acyl-ester intermediate is the Ser-195.

Belongs to the amidase family. GatA subfamily. As to quaternary structure, subunit of the heterotrimeric GatCAB amidotransferase (AdT) complex, composed of A (qrsl1), B (gatb) and C (gatc) subunits.

It is found in the mitochondrion. It catalyses the reaction L-glutamyl-tRNA(Gln) + L-glutamine + ATP + H2O = L-glutaminyl-tRNA(Gln) + L-glutamate + ADP + phosphate + H(+). In terms of biological role, allows the formation of correctly charged Gln-tRNA(Gln) through the transamidation of misacylated Glu-tRNA(Gln) in the mitochondria. The reaction takes place in the presence of glutamine and ATP through an activated gamma-phospho-Glu-tRNA(Gln). The polypeptide is Glutamyl-tRNA(Gln) amidotransferase subunit A, mitochondrial (qrsl1) (Xenopus tropicalis (Western clawed frog)).